Consider the following 51-residue polypeptide: Sperm protamine P1 (51 aa).

The protein belongs to the protamine P1 family. Testis.

It is found in the nucleus. Its subcellular location is the chromosome. Functionally, protamines substitute for histones in the chromatin of sperm during the haploid phase of spermatogenesis. They compact sperm DNA into a highly condensed, stable and inactive complex. This is Sperm protamine P1 (PRM1) from Trachypithecus cristatus (Silvered leaf-monkey).